The chain runs to 291 residues: UDP-N-acetylenolpyruvoylglucosamine reductase (291 aa).

One can recognise an FAD-binding PCMH-type domain in the interval 22-187; the sequence is RIGGPARYFK…ASATFQLTKD (166 aa). Arg166 is a catalytic residue. Cys214 functions as the Proton donor in the catalytic mechanism. Residue Glu283 is part of the active site.

The protein belongs to the MurB family. FAD is required as a cofactor.

It is found in the cytoplasm. It carries out the reaction UDP-N-acetyl-alpha-D-muramate + NADP(+) = UDP-N-acetyl-3-O-(1-carboxyvinyl)-alpha-D-glucosamine + NADPH + H(+). It functions in the pathway cell wall biogenesis; peptidoglycan biosynthesis. In terms of biological role, cell wall formation. This Chlamydia trachomatis serovar L2 (strain ATCC VR-902B / DSM 19102 / 434/Bu) protein is UDP-N-acetylenolpyruvoylglucosamine reductase.